A 502-amino-acid chain; its full sequence is Glycerol kinase (502 aa).

ADP is bound at residue threonine 14. 3 residues coordinate ATP: threonine 14, threonine 15, and serine 16. Threonine 14 provides a ligand contact to sn-glycerol 3-phosphate. Arginine 18 provides a ligand contact to ADP. Sn-glycerol 3-phosphate contacts are provided by arginine 84, glutamate 85, and tyrosine 136. Glycerol is bound by residues arginine 84, glutamate 85, and tyrosine 136. Histidine 232 bears the Phosphohistidine; by HPr mark. Aspartate 246 provides a ligand contact to sn-glycerol 3-phosphate. Glycerol is bound by residues aspartate 246 and glutamine 247. ADP contacts are provided by threonine 268 and glycine 311. ATP-binding residues include threonine 268, glycine 311, glutamine 315, and glycine 412. 2 residues coordinate ADP: glycine 412 and asparagine 416.

It belongs to the FGGY kinase family. As to quaternary structure, homotetramer and homodimer (in equilibrium). The phosphoenolpyruvate-dependent sugar phosphotransferase system (PTS), including enzyme I, and histidine-containing protein (HPr) are required for the phosphorylation, which leads to the activation of the enzyme.

The enzyme catalyses glycerol + ATP = sn-glycerol 3-phosphate + ADP + H(+). It participates in polyol metabolism; glycerol degradation via glycerol kinase pathway; sn-glycerol 3-phosphate from glycerol: step 1/1. Activated by phosphorylation and inhibited by fructose 1,6-bisphosphate (FBP). Its function is as follows. Key enzyme in the regulation of glycerol uptake and metabolism. Catalyzes the phosphorylation of glycerol to yield sn-glycerol 3-phosphate. The chain is Glycerol kinase from Streptococcus pneumoniae (strain 70585).